Consider the following 224-residue polypeptide: Probable Brix domain-containing ribosomal biogenesis protein (224 aa).

A Brix domain is found at 1–196 (MMLITTSHRP…IWIMEDGRRW (196 aa)).

Its function is as follows. Probably involved in the biogenesis of the ribosome. The polypeptide is Probable Brix domain-containing ribosomal biogenesis protein (Pyrococcus abyssi (strain GE5 / Orsay)).